The following is a 413-amino-acid chain: Ras association domain-containing protein 5 (413 aa).

Residues Met1–Glu103 are disordered. Residues Ser52–His74 show a composition bias toward basic and acidic residues. The segment at Gly117 to Cys165 adopts a Phorbol-ester/DAG-type zinc-finger fold. 2 positions are modified to phosphoserine: Ser177 and Ser274. Positions Pro265–Thr359 constitute a Ras-associating domain. Thr347 carries the post-translational modification Phosphothreonine. The SARAH domain maps to Glu361–Ser408.

Interacts directly with activated HRAS; a RASSF5-STK4/MST1 complex probably associates with activated HRAS. Interacts with KRAS. Probably interacts with Ras-like GTPases RRAS, MRAS, RAP1B, RAP2A and RALA. Interacts with RRAS2. Can self-associate. Interacts with RSSF1 isoform A. The RSSF1 isoform A-RSSF5 heterodimer probably mediates the association of RSSF1 with HRAS. Isoform 2 interacts with activated RAP1A and ITGAL/LFA-1. Binds STK4/MST1, inhibiting STK4/MST1 autoactivation.

The protein resides in the cytoplasm. It is found in the cytoskeleton. Its function is as follows. Potential tumor suppressor. Seems to be involved in lymphocyte adhesion by linking RAP1A activation upon T-cell receptor or chemokine stimulation to integrin activation. Isoform 2 stimulates lymphocyte polarization and the patch-like distribution of ITGAL/LFA-1, resulting in an enhanced adhesion to ICAM1. Together with RAP1A may participate in regulation of microtubule growth. The association of isoform 2 with activated RAP1A is required for directional movement of endothelial cells during wound healing. May be involved in regulation of Ras apoptotic function. The RASSF5-STK4/MST1 complex may mediate HRAS and KRAS induced apoptosis. The protein is Ras association domain-containing protein 5 (Rassf5) of Mus musculus (Mouse).